Consider the following 294-residue polypeptide: 4-hydroxybenzoate octaprenyltransferase (294 aa).

The next 8 membrane-spanning stretches (helical) occupy residues 20–42 (LLRI…ALWL), 98–118 (WEAV…VVLF), 120–140 (NTLT…YPFM), 145–165 (HLPQ…AWAA), 175–195 (WLLF…YAMV), 218–238 (AIIA…GQRA), 242–262 (SFYY…QYLA), and 274–294 (FLNN…DLAF).

It belongs to the UbiA prenyltransferase family. Mg(2+) is required as a cofactor.

It is found in the cell inner membrane. The enzyme catalyses all-trans-octaprenyl diphosphate + 4-hydroxybenzoate = 4-hydroxy-3-(all-trans-octaprenyl)benzoate + diphosphate. Its pathway is cofactor biosynthesis; ubiquinone biosynthesis. Catalyzes the prenylation of para-hydroxybenzoate (PHB) with an all-trans polyprenyl group. Mediates the second step in the final reaction sequence of ubiquinone-8 (UQ-8) biosynthesis, which is the condensation of the polyisoprenoid side chain with PHB, generating the first membrane-bound Q intermediate 3-octaprenyl-4-hydroxybenzoate. The chain is 4-hydroxybenzoate octaprenyltransferase from Marinobacter nauticus (strain ATCC 700491 / DSM 11845 / VT8) (Marinobacter aquaeolei).